A 415-amino-acid chain; its full sequence is Sucrose permease (415 aa).

Residues 1-16 (MALNIPFRNAYYRFAS) lie on the Cytoplasmic side of the membrane. The chain crosses the membrane as a helical span at residues 17–37 (SYSFLFFISWSLWWSLYAIWL). Over 38–48 (KGHLGLTGTEL) the chain is Periplasmic. A helical membrane pass occupies residues 49–69 (GTLYSVNQFTSILFMMFYGIV). The Cytoplasmic segment spans residues 70–77 (QDKLGLKK). A helical membrane pass occupies residues 78 to 98 (PLIWCMSFILVLTGPFMIYVY). Residues 99–107 (EPLLQSNFS) lie on the Periplasmic side of the membrane. The chain crosses the membrane as a helical span at residues 108–128 (VGLILGALFFGLGYLAGCGLL). The Cytoplasmic segment spans residues 129–147 (DSFTEKMARNFHFEYGTAR). A helical transmembrane segment spans residues 148–167 (AWGSFGYAIGAFFAGIFFSI). At 168 to 170 (SPH) the chain is on the periplasmic side. A helical membrane pass occupies residues 171 to 190 (INFWLVSLFGAVFMMINMRF). The Cytoplasmic portion of the chain corresponds to 191-220 (KDKDHQCIAADAGGVKKEDFIAVFKDRNFW). The helical transmembrane segment at 221 to 241 (VFVIFIVGTWSFYNIFDQQLF) threads the bilayer. The Periplasmic segment spans residues 242-260 (PVFYAGLFESHDVGTRLYG). A helical transmembrane segment spans residues 261–281 (YLNSFQVVLEALCMAIIPFFV). Residues 282–287 (NRVGPK) lie on the Cytoplasmic side of the membrane. Residues 288 to 308 (NALLIGVVIMALRILSCALFV) form a helical membrane-spanning segment. Over 309 to 311 (NPW) the chain is Periplasmic. Residues 312 to 332 (IISLVKLLHAIEVPLCVISVF) form a helical membrane-spanning segment. Residues 333–342 (KYSVANFDKR) lie on the Cytoplasmic side of the membrane. The chain crosses the membrane as a helical span at residues 343–363 (LSSTIFLIGFQIASSLGIVLL). Over 364-377 (STPTGILFDHAGYQ) the chain is Periplasmic. A helical membrane pass occupies residues 378–398 (TVFFAISGIVCLMLLFGIFFL). Residues 399 to 415 (SKKREQIVMETPVPSAI) lie on the Cytoplasmic side of the membrane.

This sequence belongs to the major facilitator superfamily. Oligosaccharide:H(+) symporter (OHS) (TC 2.A.1.5) family.

The protein resides in the cell inner membrane. The protein operates within glycan biosynthesis; sucrose metabolism. Its function is as follows. Responsible for transport of sucrose into the cell, with the concomitant import of a proton (symport system). Can also transport maltose, fructose or lactulose, but not glucose, lactose or melibiose. The substrate specificity is directed toward the fructofuranosyl moiety of the substrate. The protein is Sucrose permease of Escherichia coli.